Consider the following 217-residue polypeptide: Vesicle transport through interaction with t-SNAREs homolog 1A (217 aa).

The Cytoplasmic segment spans residues 1-192 (MDVFERTEQN…TGIARRLATN (192 aa)). Residues 36–97 (AVREVENDID…AQLQSSNQTN (62 aa)) adopt a coiled-coil conformation. The tract at residues 90–109 (LQSSNQTNSNPWSNAPDDYQ) is disordered. The 63-residue stretch at 123–185 (SNMLDSTSDR…KSARKIMTGI (63 aa)) folds into the t-SNARE coiled-coil homology domain. Residues 193 to 213 (KVILSIIILLLMGIIALIICL) form a helical; Anchor for type IV membrane protein membrane-spanning segment. Over 214–217 (KWLR) the chain is Vesicular.

This sequence belongs to the VTI1 family. Component of the SNARE complex composed of syn7A, syn8A, vamp7A and vti1A.

It localises to the membrane. It is found in the cytoplasmic vesicle. The protein localises to the secretory vesicle membrane. The protein resides in the clathrin-coated vesicle membrane. Its subcellular location is the endosome membrane. It localises to the endoplasmic reticulum membrane. Functionally, V-SNARE that mediates vesicle transport pathways through interactions with t-SNAREs on the target membrane. These interactions are proposed to mediate aspects of the specificity of vesicle trafficking and to promote fusion of the lipid bilayers. This is Vesicle transport through interaction with t-SNAREs homolog 1A from Dictyostelium discoideum (Social amoeba).